Reading from the N-terminus, the 40-residue chain is DNVPWGLARISHRTTGATSYVYDDSAGEGTCSYIIDTGIY.

A Peptidase S8 domain is found at 4 to 40 (PWGLARISHRTTGATSYVYDDSAGEGTCSYIIDTGIY). Asp36 (charge relay system) is an active-site residue.

Belongs to the peptidase S8 family. In terms of assembly, homodimer.

Its activity is regulated as follows. Strongly inhibited by antipain and PMSF. Inhibited by benzamidine and aprotinin by 80% and 17% respectively. Little or no inhibition by EDTA, E-64, iodoacetic acid, leupeptin and FUT-175. In terms of biological role, subtilisin-like serine protease. Cleaves prothrombin at 155-Arg-|-Ser-156, 45-Thr-|-Ala-46 and 316-Tyr-|-Ile-317 to produce meizothrombin(desF1)-like molecules. Degrades fibrinogen. Inhibits plasma coagulation. This is Subtilisin-like serine protease AS-E1 from Acremonium sp.